The chain runs to 282 residues: MRWWPALPLLLLAVAVAGAGDAAPVCTRPSAAEAIVGSPEACRSPLRRPLGVTEGDDAILARAVNLLHANKEDFAAVLFYASWCPFSQECRLRFEKLACIFPTIRHLAIEESTVRLRTRYRYGIHGYPTLFLINSTVRVRYHGPRTVKSLAAFYNDVSGINPSMDPAVGDDNIEPKRDCEQEKCLFWSARTPENILQPDTYLTLAASFVILRLLYLFYPKITAFVKRTWSRRTLFTCLEQGKHKFNRVYPSKQGNLHDGARHATAWASKSLASVSIGEPSTS.

Positions 1-19 (MRWWPALPLLLLAVAVAGA) are cleaved as a signal peptide. A Thioredoxin domain is found at 20 to 159 (GDAAPVCTRP…LAAFYNDVSG (140 aa)). A glycan (N-linked (GlcNAc...) asparagine) is linked at N134. A helical transmembrane segment spans residues 205 to 225 (AASFVILRLLYLFYPKITAFV).

The protein localises to the membrane. In Oryza sativa subsp. japonica (Rice), this protein is 5'-adenylylsulfate reductase-like 2 (APRL2).